The primary structure comprises 348 residues: Abnormal cell lineage protein 44 (348 aa).

An N-terminal signal peptide occupies residues 1 to 25 (MRAAPFDFFFQSTALSTFFILCSLA). 11 disulfides stabilise this stretch: Cys-91–Cys-102, Cys-141–Cys-149, Cys-151–Cys-165, Cys-213–Cys-227, Cys-215–Cys-222, Cys-272–Cys-299, Cys-282–Cys-294, Cys-298–Cys-338, Cys-314–Cys-329, Cys-316–Cys-326, and Cys-321–Cys-322. A lipid anchor (O-palmitoleoyl serine; by mom-1) is attached at Ser-219. N-linked (GlcNAc...) asparagine glycosylation occurs at Asn-286.

This sequence belongs to the Wnt family. Post-translationally, palmitoleoylation is required for efficient binding to frizzled receptors. Depalmitoleoylation leads to Wnt signaling pathway inhibition. In terms of tissue distribution, expressed in the tail hypodermis.

It localises to the secreted. The protein localises to the extracellular space. Its subcellular location is the extracellular matrix. Ligand for members of the frizzled family of seven transmembrane receptors. Affects male tail development, vulval precursor cell specification and egg laying. Involved in morphogenesis by influencing polarity of asymmetric cell divisions of the B, U, and F cells in the male, and the T cell in males and hermaphrodites. Controls spindle orientation in B-gamma cell division during male copulatory spicule development. Involved in specification of the P7.p lineage during vulval development. Has a role in providing polarity and default lin-17 localization in axon development and positioning of neuromuscular synapses in DA9 regions by negatively regulating synaptogenesis. Plays a role in motorneuron development by promoting the extension of the anterior neurite of ventral D-type GABAergic motorneurons along the anterior-posterior axis of the ventral nerve cord. Positively regulates cilium position and dendrite morphogenesis in postembryonic PQR gas-sensing neurons. This is likely through regulating the localization of grdn-1 to the distal dendrites of PQR sensory neurons. In Caenorhabditis elegans, this protein is Abnormal cell lineage protein 44.